The sequence spans 104 residues: Phosphoribosyl-ATP pyrophosphatase (104 aa).

It belongs to the PRA-PH family.

The protein localises to the cytoplasm. The catalysed reaction is 1-(5-phospho-beta-D-ribosyl)-ATP + H2O = 1-(5-phospho-beta-D-ribosyl)-5'-AMP + diphosphate + H(+). The protein operates within amino-acid biosynthesis; L-histidine biosynthesis; L-histidine from 5-phospho-alpha-D-ribose 1-diphosphate: step 2/9. The protein is Phosphoribosyl-ATP pyrophosphatase of Methanocorpusculum labreanum (strain ATCC 43576 / DSM 4855 / Z).